The following is a 624-amino-acid chain: DNA (cytosine-5)-methyltransferase DRM1 (624 aa).

UBA domains lie at 57–100 and 108–149; these read RISD…LFNY and SSKS…LLTY. Residues 160–189 are disordered; sequence DMNININDDDDDNLYSLSSDDEEDELNNSS. Residues 166-185 are compositionally biased toward acidic residues; it reads NDDDDDNLYSLSSDDEEDEL. The 44-residue stretch at 188–231 folds into the UBA 3 domain; sequence SSNEDRILQALIKMGYLREDAAIAIERCGEDASMEEVVDFICAA. In terms of domain architecture, SAM-dependent MTase DRM-type spans 291-622; that stretch reads MHRPVPIPDI…EAVRRKARHM (332 aa).

Belongs to the class I-like SAM-binding methyltransferase superfamily. DRM-methyltransferase family.

The protein resides in the nucleus. It catalyses the reaction a 2'-deoxycytidine in DNA + S-adenosyl-L-methionine = a 5-methyl-2'-deoxycytidine in DNA + S-adenosyl-L-homocysteine + H(+). Involved in de novo DNA methylation. Controls asymmetric and CpNpG methylation. Required for FWA gene silencing but not for the maintenance of SUP gene silencing. Functionally redundant to CMT3 to maintain non-CpG methylation. Involved in RNA-directed DNA methylation. In Arabidopsis thaliana (Mouse-ear cress), this protein is DNA (cytosine-5)-methyltransferase DRM1 (DRM1).